The following is a 459-amino-acid chain: Methylenetetrahydrofolate--tRNA-(uracil-5-)-methyltransferase TrmFO (459 aa).

15 to 20 provides a ligand contact to FAD; the sequence is GAGLAG.

The protein belongs to the MnmG family. TrmFO subfamily. FAD is required as a cofactor.

It localises to the cytoplasm. The enzyme catalyses uridine(54) in tRNA + (6R)-5,10-methylene-5,6,7,8-tetrahydrofolate + NADH + H(+) = 5-methyluridine(54) in tRNA + (6S)-5,6,7,8-tetrahydrofolate + NAD(+). It carries out the reaction uridine(54) in tRNA + (6R)-5,10-methylene-5,6,7,8-tetrahydrofolate + NADPH + H(+) = 5-methyluridine(54) in tRNA + (6S)-5,6,7,8-tetrahydrofolate + NADP(+). Functionally, catalyzes the folate-dependent formation of 5-methyl-uridine at position 54 (M-5-U54) in all tRNAs. The polypeptide is Methylenetetrahydrofolate--tRNA-(uracil-5-)-methyltransferase TrmFO (Syntrophotalea carbinolica (strain DSM 2380 / NBRC 103641 / GraBd1) (Pelobacter carbinolicus)).